Here is a 171-residue protein sequence, read N- to C-terminus: MKFYTISSKYIEYLKEFDDKVPNSEDPTYQNPKAFIGIVLEIQGHKYLAPLTSPKKWHNNVKESSLSCFKLHENGVPENQLGLINLKFMIPIIEAEVSLLDLGNMPNTPYKRMLYKQLQFIRANSDKIASKSDTLRNLVLQGKMQGTCNFSLLEEKYRDFGKEAEDTEEGE.

It belongs to the ToxN/AbiQ toxin family. In terms of assembly, one ToxN monomer binds to a 36-nt-long single repeat of the ToxI RNA; this complex forms a triangular heterohexameric complex with ToxN connected by the ToxI RNA to another toxin molecule. The ToxI repeat forms a pseudoknot which occludes the toxin active site. Interaction of ToxI with ToxN partially inhibits the latter's endoribonuclease activity in vitro. The complex self-assembles in vitro with either full-length or processed single repeats; during the process the precursor is processed.

Functionally, toxic component of a type III toxin-antitoxin (TA) system. An endoribonuclease which is active independently of the ribosome, cleaving between the second and third A of AAA(U/G) sequences, although not all occurrences of this tetranucleotide are cleaved. Digests many mRNA species, including its own transcript and its cognate antitoxin RNA ToxI. ToxI has 5.5 nearly identical 36 nucleotide-long repeats (a single repeat neutralizes the toxin in vivo); a single repeat folds into a pseudoknot which binds the toxin. The ToxI precursor RNA is a preferential target in vivo and is progressively degraded to single repeat lengths as ToxN-ToxI complex self-assembly occurs. In vivo expression of ToxI antitoxin inhibits endonuclease activity of ToxN. The toxin alone inhibits growth when expressed in E.coli without causing cell lysis; this bacteriostatic effect is neutralized by cognate RNA antitoxin ToxI. Non-cognate antitoxin RNA from B.thuringiensis does not inhibit this toxin. The RNA antitoxin is less stable than the proteinaceous toxin; synthesis of ToxI in the absence of new ToxN synthesis restores growth and also detectable accumulation of the ToxN protein. Negatively regulates its own operon in complex with ToxI. The toxin-antitoxin system functions in plasmid maintenance (a plasmid addiction system). In terms of biological role, the TA system protects P.atrosepticum strain 1043 against phage phiM1 and phiA2, E.coli against some but not all coliphages and S.marcescens against some bacteriophages, causing an abortive infection (Abi phenotype). Also protects P.atrosepticum strain 1043 against phage phiTE; phage that escape Abi and grow in this bacterium have evolved a pseudo-ToxI RNA by expanding a pre-existing sequence similar to the bona fide ToxI repeats. In Pectobacterium atrosepticum (Erwinia carotovora subsp. atroseptica), this protein is Endoribonuclease ToxN.